We begin with the raw amino-acid sequence, 398 residues long: MRASYMFTSESVSEGHPDKVCDRISDEVVDLFFREGPKAGISPWAIRAACETLATTNKVVIAGETRGPASVTNDQIESVVRAAIKDIGYEQEGFHWETCDIEILLHPQSADIAQGVDALQPGTNQEEGAGDQGIMFGYATNETPDLMPAPIFYAHKILRLISEARHSGKEKVLGPDSKSQVTIQYENGKPVGVREIVVSHQHLVEDMTSAHVRERVEPYVRQALPADWITDKTIWHINPTGKFYIGGPDGDTGLTGRKIIVDTYGGAAPHGGGAFSGKDPTKVDRSAAYASRYLAKNIVAAGLADRCTLQLAYAIGVARPLSIYIDTHGTGKVSEDKLEKAVAEAMDLTPRGIRTHLDLNKPIYARTSSYGHFGRTPDADGGFSWEKTDLADALKRAV.

His-16 serves as a coordination point for ATP. Residue Asp-18 participates in Mg(2+) binding. Glu-51 lines the K(+) pocket. Glu-64 and Gln-108 together coordinate L-methionine. The tract at residues 108–118 is flexible loop; the sequence is QSADIAQGVDA. ATP contacts are provided by residues 176 to 178, 242 to 243, Asp-251, 257 to 258, Ala-274, and Lys-278; these read DSK, KF, and RK. L-methionine is bound at residue Asp-251. Lys-282 contacts L-methionine.

The protein belongs to the AdoMet synthase family. Homotetramer; dimer of dimers. Mg(2+) is required as a cofactor. The cofactor is K(+).

It is found in the cytoplasm. It catalyses the reaction L-methionine + ATP + H2O = S-adenosyl-L-methionine + phosphate + diphosphate. Its pathway is amino-acid biosynthesis; S-adenosyl-L-methionine biosynthesis; S-adenosyl-L-methionine from L-methionine: step 1/1. Functionally, catalyzes the formation of S-adenosylmethionine (AdoMet) from methionine and ATP. The overall synthetic reaction is composed of two sequential steps, AdoMet formation and the subsequent tripolyphosphate hydrolysis which occurs prior to release of AdoMet from the enzyme. This is S-adenosylmethionine synthase from Rhodopseudomonas palustris (strain BisB5).